The sequence spans 273 residues: Glutamate racemase (273 aa).

Substrate-binding positions include 11-12 (DS) and 43-44 (YG). The Proton donor/acceptor role is filled by Cys74. 75 to 76 (NT) contributes to the substrate binding site. The active-site Proton donor/acceptor is Cys185. A substrate-binding site is contributed by 186-187 (TH).

Belongs to the aspartate/glutamate racemases family.

The catalysed reaction is L-glutamate = D-glutamate. It functions in the pathway cell wall biogenesis; peptidoglycan biosynthesis. Its function is as follows. Provides the (R)-glutamate required for cell wall biosynthesis. This Lactiplantibacillus plantarum (strain ATCC BAA-793 / NCIMB 8826 / WCFS1) (Lactobacillus plantarum) protein is Glutamate racemase.